The primary structure comprises 500 residues: Cytochrome P450 2D3 (500 aa).

Cys-446 provides a ligand contact to heme.

This sequence belongs to the cytochrome P450 family. Requires heme as cofactor.

It is found in the endoplasmic reticulum membrane. The protein resides in the microsome membrane. The enzyme catalyses an organic molecule + reduced [NADPH--hemoprotein reductase] + O2 = an alcohol + oxidized [NADPH--hemoprotein reductase] + H2O + H(+). Cytochromes P450 are a group of heme-thiolate monooxygenases. In liver microsomes, this enzyme is involved in an NADPH-dependent electron transport pathway. It oxidizes a variety of structurally unrelated compounds, including steroids, fatty acids, and xenobiotics. The polypeptide is Cytochrome P450 2D3 (Cyp2d3) (Rattus norvegicus (Rat)).